The primary structure comprises 379 residues: Nucleosome assembly protein 1;2 (379 aa).

Residues 26–80 (VNALKNKLQNLAGQHSDVLENLTPPVRKRVEFLREIQNQYDEMEAKFFEERAALE) are a coiled coil. Ser41 is modified (phosphoserine). Residues 47-62 (LTPPVRKRVEFLREIQ) carry the Nuclear export signal motif. Positions 222 to 227 (KKKPKK) match the Nuclear localization signal motif. Residues 298–379 (AVEADDLDIE…GERPPECKQQ (82 aa)) are disordered. Positions 299–342 (VEADDLDIEDDDDEIDEDDDEEDEEDDEDDEEEDDEDDDEEEEA) are enriched in acidic residues. Positions 347–360 (KSKKKSSAGHKKAG) are enriched in basic residues. A Cysteine methyl ester modification is found at Cys376. The S-farnesyl cysteine moiety is linked to residue Cys376. Positions 377 to 379 (KQQ) are cleaved as a propeptide — removed in mature form.

This sequence belongs to the nucleosome assembly protein (NAP) family. As to quaternary structure, can form homomeric and heteromeric protein complexes with NAP1;1, NAP1;3 and NAP1;4. Binds histone H2A. In terms of tissue distribution, ubiquitous.

Its subcellular location is the nucleus. It localises to the cytoplasm. In terms of biological role, may modulate chromatin structure by regulation of nucleosome assembly/disassembly. May function in nucleotide excision repair (NER). Involved in somatic homologous recombination. The chain is Nucleosome assembly protein 1;2 (NAP1;2) from Arabidopsis thaliana (Mouse-ear cress).